We begin with the raw amino-acid sequence, 314 residues long: Methionyl-tRNA formyltransferase (314 aa).

113–116 lines the (6S)-5,6,7,8-tetrahydrofolate pocket; sequence SLLP.

It belongs to the Fmt family.

The catalysed reaction is L-methionyl-tRNA(fMet) + (6R)-10-formyltetrahydrofolate = N-formyl-L-methionyl-tRNA(fMet) + (6S)-5,6,7,8-tetrahydrofolate + H(+). Functionally, attaches a formyl group to the free amino group of methionyl-tRNA(fMet). The formyl group appears to play a dual role in the initiator identity of N-formylmethionyl-tRNA by promoting its recognition by IF2 and preventing the misappropriation of this tRNA by the elongation apparatus. This Pseudomonas aeruginosa (strain UCBPP-PA14) protein is Methionyl-tRNA formyltransferase.